Here is a 116-residue protein sequence, read N- to C-terminus: Putative membrane protein insertion efficiency factor (116 aa).

The protein belongs to the UPF0161 family.

The protein localises to the cell inner membrane. In terms of biological role, could be involved in insertion of integral membrane proteins into the membrane. The protein is Putative membrane protein insertion efficiency factor of Bartonella tribocorum (strain CIP 105476 / IBS 506).